Consider the following 125-residue polypeptide: Alpha-endosulfine (125 aa).

Residues 1-37 (MSDKYIGDSHLEETGEEKQDSQEKEAVTPEKAEEQKL) are compositionally biased toward basic and acidic residues. The disordered stretch occupies residues 1–53 (MSDKYIGDSHLEETGEEKQDSQEKEAVTPEKAEEQKLKAKYPNLGQKPGGSDF). Position 28 is a phosphothreonine; by CDK2 (T28). S67 bears the Phosphoserine; by GWL mark. The tract at residues 81–108 (QLPCAGPDKNLVTGDHIPTPQDLPQRKS) is disordered. Residue T99 is modified to Phosphothreonine; by CDK2. Position 109 is a phosphoserine; by PKA (S109).

Belongs to the endosulfine family. Post-translationally, phosphorylation at Ser-67 by gwl during mitosis is essential for interaction with ppp2r2d (PR55-delta) and subsequent inactivation of PP2A.

The protein localises to the cytoplasm. In terms of biological role, protein phosphatase inhibitor that specifically inhibits protein phosphatase 2A (PP2A) during mitosis. When phosphorylated at Ser-67 during mitosis, specifically interacts with ppp2r2d (PR55-delta) and inhibits its activity, leading to inactivation of PP2A, an essential condition to keep cyclin-B1-CDK1 activity high during M phase. The polypeptide is Alpha-endosulfine (ensa) (Xenopus tropicalis (Western clawed frog)).